A 324-amino-acid chain; its full sequence is MAPLLLQLAVLGAALAAAALVLISIVAFTTATKMPALHRHEEEKFFLNAKGQKETLPSIWDSPTKQLSVVVPSYNEEKRLPVMMDEALSYLEKRQKRDPAFTYEVIVVDDGSKDQTSKVAFKYCQKYGSDKVRVITLVKNRGKGGAIRMGIFSSRGEKILMADADGATKFPDVEKLEKGLNDLQPWPNQMAIACGSRAHLEKESIAQRSYFRTLLMYGFHFLVWFLCVKGIRDTQCGFKLFTREAASRTFSSLHVERWAFDVELLYIAQFFKIPIAEIAVNWTEIEGSKLVPFWSWLQMGKDLLFIRLRYLTGAWRLEQTRKMN.

The Lumenal segment spans residues 1–7; the sequence is MAPLLLQ. A helical; Signal-anchor for type II membrane protein membrane pass occupies residues 8 to 28; it reads LAVLGAALAAAALVLISIVAF. At 29–324 the chain is on the cytoplasmic side; that stretch reads TTATKMPALH…WRLEQTRKMN (296 aa).

The protein belongs to the glycosyltransferase 2 family. Expressed in pancreas, placenta, liver, heart, brain, kidney, skeletal muscle, and lung.

The protein resides in the endoplasmic reticulum membrane. The catalysed reaction is a di-trans,poly-cis-dolichyl phosphate + UDP-alpha-D-glucose = a di-trans,poly-cis-dolichyl beta-D-glucosyl phosphate + UDP. The protein operates within protein modification; protein glycosylation. In terms of biological role, dolichyl-phosphate beta-glucosyltransferase that operates in the biosynthetic pathway of dolichol-linked oligosaccharides, the glycan precursors employed in protein asparagine (N)-glycosylation. The assembly of dolichol-linked oligosaccharides begins on the cytosolic side of the endoplasmic reticulum membrane and finishes in its lumen. The sequential addition of sugars to dolichol pyrophosphate produces dolichol-linked oligosaccharides containing fourteen sugars, including two GlcNAcs, nine mannoses and three glucoses. Once assembled, the oligosaccharide is transferred from the lipid to nascent proteins by oligosaccharyltransferases. Dolichyl-phosphate beta-glucosyltransferase produces dolichyl beta-D-glucosyl phosphate/Dol-P-Glc, the glucose donor substrate used sequentially by ALG6, ALG8 and ALG10 to add glucose residues on top of the Man(9)GlcNAc(2)-PP-Dol structure. These are the three last steps in the biosynthetic pathway of dolichol-linked oligosaccharides to produce Glc(3)Man(9)GlcNAc(2)-PP-Dol. The enzyme is most probably active on the cytoplasmic side of the endoplasmic reticulum while its product Dol-P-Glc is the substrate for ALG6, ALG8 and ALG11 in the lumen of the endoplasmic reticulum. The sequence is that of Dolichyl-phosphate beta-glucosyltransferase from Homo sapiens (Human).